A 123-amino-acid polypeptide reads, in one-letter code: Small ribosomal subunit protein uS13c (123 aa).

Positions 89–123 (RGKRHRNNLPVRGQRTRTNARSRRGSKKTVTGKKK) are disordered. The span at 102-123 (QRTRTNARSRRGSKKTVTGKKK) shows a compositional bias: basic residues.

This sequence belongs to the universal ribosomal protein uS13 family. Part of the 30S ribosomal subunit.

The protein localises to the plastid. Its subcellular location is the chloroplast. In terms of biological role, located at the top of the head of the 30S subunit, it contacts several helices of the 16S rRNA. This Phaeodactylum tricornutum (strain CCAP 1055/1) protein is Small ribosomal subunit protein uS13c.